The sequence spans 545 residues: Chaperonin GroEL (545 aa).

Residues 30-33 (TLGP), Lys51, 87-91 (DGTTT), Gly415, and Asp495 contribute to the ATP site.

It belongs to the chaperonin (HSP60) family. As to quaternary structure, forms a cylinder of 14 subunits composed of two heptameric rings stacked back-to-back. Interacts with the co-chaperonin GroES.

The protein resides in the cytoplasm. The enzyme catalyses ATP + H2O + a folded polypeptide = ADP + phosphate + an unfolded polypeptide.. In terms of biological role, together with its co-chaperonin GroES, plays an essential role in assisting protein folding. The GroEL-GroES system forms a nano-cage that allows encapsulation of the non-native substrate proteins and provides a physical environment optimized to promote and accelerate protein folding. This Shewanella amazonensis (strain ATCC BAA-1098 / SB2B) protein is Chaperonin GroEL.